A 127-amino-acid chain; its full sequence is Fluoride-specific ion channel FluC (127 aa).

Helical transmembrane passes span 1–21 (MPQG…GACL), 39–59 (FGTL…YGVI), 72–92 (LIGV…VETL), and 105–125 (ANVF…IELM). Glycine 79 and threonine 82 together coordinate Na(+).

This sequence belongs to the fluoride channel Fluc/FEX (TC 1.A.43) family.

The protein resides in the cell inner membrane. It carries out the reaction fluoride(in) = fluoride(out). Its activity is regulated as follows. Na(+) is not transported, but it plays an essential structural role and its presence is essential for fluoride channel function. Fluoride-specific ion channel. Important for reducing fluoride concentration in the cell, thus reducing its toxicity. This chain is Fluoride-specific ion channel FluC, found in Alteromonas mediterranea (strain DSM 17117 / CIP 110805 / LMG 28347 / Deep ecotype).